The sequence spans 274 residues: Thiamine kinase (274 aa).

It belongs to the thiamine kinase family.

The catalysed reaction is thiamine + ATP = thiamine phosphate + ADP + H(+). The protein operates within cofactor biosynthesis; thiamine diphosphate biosynthesis; thiamine phosphate from thiamine: step 1/1. Its function is as follows. Catalyzes the ATP-dependent phosphorylation of thiamine to thiamine phosphate. Is involved in thiamine salvage. In Salmonella newport (strain SL254), this protein is Thiamine kinase.